The primary structure comprises 184 residues: Ribosome maturation factor RimM (184 aa).

The PRC barrel domain occupies 101-180 (EGEFFYCDLV…KITTHNAKTL (80 aa)).

The protein belongs to the RimM family. Binds ribosomal protein uS19.

It is found in the cytoplasm. Its function is as follows. An accessory protein needed during the final step in the assembly of 30S ribosomal subunit, possibly for assembly of the head region. Essential for efficient processing of 16S rRNA. May be needed both before and after RbfA during the maturation of 16S rRNA. It has affinity for free ribosomal 30S subunits but not for 70S ribosomes. This Helicobacter pylori (strain ATCC 700392 / 26695) (Campylobacter pylori) protein is Ribosome maturation factor RimM.